A 279-amino-acid chain; its full sequence is Phosphatidylglycerol--prolipoprotein diacylglyceryl transferase (279 aa).

Helical transmembrane passes span 22–42, 52–72, and 89–109; these read WYGI…QAAL, LIDI…IYFV, and IWHG…SGII. Arginine 137 is an a 1,2-diacyl-sn-glycero-3-phospho-(1'-sn-glycerol) binding site. 2 consecutive transmembrane segments (helical) span residues 203-223 and 235-255; these read LGET…FVEA and IRVA…FVIY.

Belongs to the Lgt family.

The protein localises to the cell membrane. It catalyses the reaction L-cysteinyl-[prolipoprotein] + a 1,2-diacyl-sn-glycero-3-phospho-(1'-sn-glycerol) = an S-1,2-diacyl-sn-glyceryl-L-cysteinyl-[prolipoprotein] + sn-glycerol 1-phosphate + H(+). The protein operates within protein modification; lipoprotein biosynthesis (diacylglyceryl transfer). Catalyzes the transfer of the diacylglyceryl group from phosphatidylglycerol to the sulfhydryl group of the N-terminal cysteine of a prolipoprotein, the first step in the formation of mature lipoproteins. This chain is Phosphatidylglycerol--prolipoprotein diacylglyceryl transferase, found in Staphylococcus epidermidis (strain ATCC 35984 / DSM 28319 / BCRC 17069 / CCUG 31568 / BM 3577 / RP62A).